The sequence spans 632 residues: MSDESHPHERHMTPRKLFYLALGSVGVVYGDIGTSPLYAFREALKPVAHDGVTRFEVISLISLMIWALTIIVTIKYVLFLLRADNDGEGGTLSLLALLMKTANGHTALLMLLGLMGAALFLGDAMITPALSVLSAVEGLKLVTPSLAEYIVPISVVILALLFVVQSRGTGAVAKFFGPITAVWFLVMAAAGISHISDDFGILAAFNPYYAVSFLLHEGFYGVVVLGAVFLTVTGAEALYADLGHFGRRPIQWAWFLLVFPALTLNYLGQGALVLGKPETMSDPFYLMYPQWALLPVVILATAATIIASQAVITGAFSLVRQGINLGFLPRMEILFTSETNTGQIFLPSVNAVLFFGVIFLVLSFKTSDALATAYGISVTGAMVVTSIMAFEFVRARWNWSLPVAVIALAPLVVLEMIFLGANLLKIHDGGYIPILIATAFTVVMWTWRRGTAILMEKTRHTDIPLASFVSSIERKSEHSPAQVPGTAIFLTSDPESAPAALLHNLKHNHVLHDRNVILTIRTVNKPRVPSHDRYKVEPISERFSRVELLFGFMESQNVSQALATLRKTGLKFDIMSTSFYLGRRKLVPDAKSGMPYWQDRLYIALANAAANPSDYFRLPANRVVELGSHVII.

12 helical membrane-spanning segments follow: residues 17–37 (LFYL…TSPL), 60–80 (LISL…VLFL), 106–126 (TALL…DAMI), 144–164 (PSLA…LFVV), 175–195 (FFGP…ISHI), 210–230 (AVSF…AVFL), 254–274 (WFLL…ALVL), 292–312 (ALLP…QAVI), 344–364 (IFLP…VLSF), 370–390 (LATA…IMAF), 401–421 (LPVA…FLGA), and 426–446 (IHDG…VMWT).

This sequence belongs to the HAK/KUP transporter (TC 2.A.72) family.

The protein resides in the cell inner membrane. The catalysed reaction is K(+)(in) + H(+)(in) = K(+)(out) + H(+)(out). In terms of biological role, transport of potassium into the cell. Likely operates as a K(+):H(+) symporter. The sequence is that of Probable potassium transport system protein Kup 1 from Rhizobium etli (strain ATCC 51251 / DSM 11541 / JCM 21823 / NBRC 15573 / CFN 42).